The chain runs to 236 residues: MAATLLDVCAVVPAAGFGRRMQTECPKQYLSIGNKTILEHSVHALLAHPRVTRVVIVISPGDHRFAQLPLANHPQITVVDGGNERADSVMAGLQAVAQAKWVLVHDAARPCLHQDDLARLLAISENSRVGGILASPVRDTMKRGEPGKAAIAHTVERADLWHALTPQFFPRELLHDCLTRALKEGATITDEASALEYCGFHPALVEGRADNIKVTRPEDLALAEFYLTRTIHQEKA.

It belongs to the IspD/TarI cytidylyltransferase family. IspD subfamily. As to quaternary structure, homodimer.

The enzyme catalyses 2-C-methyl-D-erythritol 4-phosphate + CTP + H(+) = 4-CDP-2-C-methyl-D-erythritol + diphosphate. Its pathway is isoprenoid biosynthesis; isopentenyl diphosphate biosynthesis via DXP pathway; isopentenyl diphosphate from 1-deoxy-D-xylulose 5-phosphate: step 2/6. Its function is as follows. Catalyzes the formation of 4-diphosphocytidyl-2-C-methyl-D-erythritol from CTP and 2-C-methyl-D-erythritol 4-phosphate (MEP). This chain is 2-C-methyl-D-erythritol 4-phosphate cytidylyltransferase, found in Salmonella arizonae (strain ATCC BAA-731 / CDC346-86 / RSK2980).